A 460-amino-acid polypeptide reads, in one-letter code: UDP-glucuronate 4-epimerase 6 (460 aa).

The next 2 helical transmembrane spans lie at Ala-41–Ser-61 and Gly-111–Leu-131. Ser-113–Phe-144 contributes to the NAD(+) binding site. Tyr-263 serves as the catalytic Proton acceptor.

It belongs to the NAD(P)-dependent epimerase/dehydratase family. In terms of assembly, homodimer. In terms of tissue distribution, in roots, leaf veins, siliques, flowers, pollen and stems.

It is found in the golgi apparatus. The protein resides in the golgi stack membrane. It catalyses the reaction UDP-alpha-D-glucuronate = UDP-alpha-D-galacturonate. Involved in the synthesis of the negatively charged monosaccharide that forms the backbone of pectic cell wall components. The protein is UDP-glucuronate 4-epimerase 6 (GAE6) of Arabidopsis thaliana (Mouse-ear cress).